Reading from the N-terminus, the 263-residue chain is L-aspartate dehydrogenase (263 aa).

Residues Ala-120 and Asn-186 each coordinate NAD(+). The active site involves His-216.

The protein belongs to the L-aspartate dehydrogenase family.

The catalysed reaction is L-aspartate + NADP(+) + H2O = oxaloacetate + NH4(+) + NADPH + H(+). The enzyme catalyses L-aspartate + NAD(+) + H2O = oxaloacetate + NH4(+) + NADH + H(+). It participates in cofactor biosynthesis; NAD(+) biosynthesis; iminoaspartate from L-aspartate (dehydrogenase route): step 1/1. Specifically catalyzes the NAD or NADP-dependent dehydrogenation of L-aspartate to iminoaspartate. The polypeptide is L-aspartate dehydrogenase (Acinetobacter baumannii (strain AB307-0294)).